Consider the following 437-residue polypeptide: Serine carboxypeptidase-like 9 (437 aa).

Residues 1–21 (MSLILKFMLLILLVSSHHVRS) form the signal peptide. N-linked (GlcNAc...) asparagine glycosylation occurs at asparagine 101. Residue serine 175 is part of the active site. Cystine bridges form between cysteine 243–cysteine 257 and cysteine 281–cysteine 293. 2 N-linked (GlcNAc...) asparagine glycosylation sites follow: asparagine 307 and asparagine 346. The active site involves aspartate 362. N-linked (GlcNAc...) asparagine glycosylation occurs at asparagine 378. Histidine 415 is a catalytic residue.

Belongs to the peptidase S10 family. As to expression, expressed in seedlings, leaves, flowers and siliques.

The protein resides in the secreted. The enzyme catalyses 2 1-O-(trans-sinapoyl)-beta-D-glucose = 1,2-di-O-sinapoyl beta-D-glucose + D-glucose. Catalyzes the formation of 1,2-bis-O-sinapoyl beta-D-glucoside and an unidentified compound 1. This is Serine carboxypeptidase-like 9 (SCPL9) from Arabidopsis thaliana (Mouse-ear cress).